The chain runs to 288 residues: uncharacterized protein (288 aa).

The chain crosses the membrane as a helical span at residues 92–112; that stretch reads LPTILVILGVIVVIAIVYAII. The interval 121–183 is disordered; it reads DDHNAASEKA…NDSEKLEIKA (63 aa). Composition is skewed to basic and acidic residues over residues 136–146 and 154–181; these read SKYEIPKDSTL and SEKE…KLEI. Positions 147 to 185 form a coiled coil; the sequence is KENQNNSSEKETDTKKETKENEDKKKENDSEKLEIKAAG.

The protein localises to the cell membrane. This is an uncharacterized protein from Bacillus subtilis (strain 168).